We begin with the raw amino-acid sequence, 177 residues long: Large ribosomal subunit protein uL6 (177 aa).

The protein belongs to the universal ribosomal protein uL6 family. In terms of assembly, part of the 50S ribosomal subunit.

This protein binds to the 23S rRNA, and is important in its secondary structure. It is located near the subunit interface in the base of the L7/L12 stalk, and near the tRNA binding site of the peptidyltransferase center. In Methylocella silvestris (strain DSM 15510 / CIP 108128 / LMG 27833 / NCIMB 13906 / BL2), this protein is Large ribosomal subunit protein uL6.